A 161-amino-acid polypeptide reads, in one-letter code: MATKKNEQIKGRTDGLVAENRRSRREYSVEDTLEAGIMLVGSEVKSLREGRANIAESYASVEQGELWLINAEIQTYGGANRFNHEPRRKRKLLVSRRELSKLSQEVERAGRTIVPLKLYFNDKGRAKLLIGVATGRKAHDKREHEAKRDWARDKARIMKAG.

The segment at 1-23 is disordered; it reads MATKKNEQIKGRTDGLVAENRRS.

This sequence belongs to the SmpB family.

Its subcellular location is the cytoplasm. Required for rescue of stalled ribosomes mediated by trans-translation. Binds to transfer-messenger RNA (tmRNA), required for stable association of tmRNA with ribosomes. tmRNA and SmpB together mimic tRNA shape, replacing the anticodon stem-loop with SmpB. tmRNA is encoded by the ssrA gene; the 2 termini fold to resemble tRNA(Ala) and it encodes a 'tag peptide', a short internal open reading frame. During trans-translation Ala-aminoacylated tmRNA acts like a tRNA, entering the A-site of stalled ribosomes, displacing the stalled mRNA. The ribosome then switches to translate the ORF on the tmRNA; the nascent peptide is terminated with the 'tag peptide' encoded by the tmRNA and targeted for degradation. The ribosome is freed to recommence translation, which seems to be the essential function of trans-translation. The polypeptide is SsrA-binding protein (Hyphomonas neptunium (strain ATCC 15444)).